A 244-amino-acid chain; its full sequence is NAD(P)H-quinone oxidoreductase subunit K (244 aa).

Cys60, Cys61, Cys125, and Cys156 together coordinate [4Fe-4S] cluster.

Belongs to the complex I 20 kDa subunit family. NDH-1 can be composed of about 15 different subunits; different subcomplexes with different compositions have been identified which probably have different functions. [4Fe-4S] cluster serves as cofactor.

It localises to the cellular thylakoid membrane. The enzyme catalyses a plastoquinone + NADH + (n+1) H(+)(in) = a plastoquinol + NAD(+) + n H(+)(out). The catalysed reaction is a plastoquinone + NADPH + (n+1) H(+)(in) = a plastoquinol + NADP(+) + n H(+)(out). Its function is as follows. NDH-1 shuttles electrons from an unknown electron donor, via FMN and iron-sulfur (Fe-S) centers, to quinones in the respiratory and/or the photosynthetic chain. The immediate electron acceptor for the enzyme in this species is believed to be plastoquinone. Couples the redox reaction to proton translocation, and thus conserves the redox energy in a proton gradient. Cyanobacterial NDH-1 also plays a role in inorganic carbon-concentration. The chain is NAD(P)H-quinone oxidoreductase subunit K from Prochlorococcus marinus (strain MIT 9515).